A 209-amino-acid chain; its full sequence is Ribosomal RNA large subunit methyltransferase E (209 aa).

Residues glycine 63, tryptophan 65, aspartate 83, aspartate 99, and aspartate 124 each coordinate S-adenosyl-L-methionine. Lysine 164 serves as the catalytic Proton acceptor.

It belongs to the class I-like SAM-binding methyltransferase superfamily. RNA methyltransferase RlmE family.

It is found in the cytoplasm. The enzyme catalyses uridine(2552) in 23S rRNA + S-adenosyl-L-methionine = 2'-O-methyluridine(2552) in 23S rRNA + S-adenosyl-L-homocysteine + H(+). Specifically methylates the uridine in position 2552 of 23S rRNA at the 2'-O position of the ribose in the fully assembled 50S ribosomal subunit. This Shewanella loihica (strain ATCC BAA-1088 / PV-4) protein is Ribosomal RNA large subunit methyltransferase E.